Consider the following 219-residue polypeptide: Thiopurine S-methyltransferase (219 aa).

Residues Trp10, Leu45, Glu66, and Arg123 each contribute to the S-adenosyl-L-methionine site.

The protein belongs to the class I-like SAM-binding methyltransferase superfamily. TPMT family.

The protein localises to the cytoplasm. The catalysed reaction is S-adenosyl-L-methionine + a thiopurine = S-adenosyl-L-homocysteine + a thiopurine S-methylether.. This Bordetella pertussis (strain Tohama I / ATCC BAA-589 / NCTC 13251) protein is Thiopurine S-methyltransferase.